An 84-amino-acid chain; its full sequence is MNDKTQHFSFDDAMEKKVKEILSEVYSALKEKGYNPIAQLVGYLISGDPTYITNHKNARSIIRRIERDEILEEIVKFYIDHNIE.

It belongs to the UPF0297 family.

This chain is UPF0297 protein Csac_1773, found in Caldicellulosiruptor saccharolyticus (strain ATCC 43494 / DSM 8903 / Tp8T 6331).